The chain runs to 301 residues: Probable alpha-L-glutamate ligase 1 (301 aa).

Residues 104–287 (MQLMSRRGIG…VAGAIIDFVE (184 aa)) form the ATP-grasp domain. ATP is bound by residues lysine 141, 178-179 (EY), aspartate 187, and 211-213 (RSN). 3 residues coordinate Mg(2+): aspartate 248, glutamate 260, and asparagine 262. Mn(2+)-binding residues include aspartate 248, glutamate 260, and asparagine 262.

It belongs to the RimK family. The cofactor is Mg(2+). Requires Mn(2+) as cofactor.

This chain is Probable alpha-L-glutamate ligase 1, found in Shewanella baltica (strain OS185).